Here is a 705-residue protein sequence, read N- to C-terminus: DNA polymerase alpha subunit B (705 aa).

A disordered region spans residues 115 to 199 (KKRKLHGPFS…TPTTSRQNVP (85 aa)). Polar residues predominate over residues 125-134 (LSDSKQTYNV). Ser-126 is modified (phosphoserine). Low complexity predominate over residues 181–197 (STFQTPTTNTPTTSRQN).

The protein belongs to the DNA polymerase alpha subunit B family. DNA polymerase alpha:primase is a four subunit enzyme complex, which is assembled throughout the cell cycle, and consists of the two DNA polymerase subunits A POL1 and B POL12, and the DNA primase large PRI2 and small PRI1 subunits. Subunit B POL12 binds to subunit A POL1. Post-translationally, phosphorylated in a cell cycle-dependent manner.

The protein localises to the nucleus. Its function is as follows. Non-catalytic component of DNA polymerase alpha, which in a complex with DNA primase (DNA polymerase alpha:primase) constitutes a replicative polymerase. POL12 may play an essential role at the early stage of chromosomal DNA replication by coupling DNA polymerase alpha to the cellular replication machinery. Interacts with MCM10. The sequence is that of DNA polymerase alpha subunit B (POL12) from Saccharomyces cerevisiae (strain ATCC 204508 / S288c) (Baker's yeast).